A 778-amino-acid chain; its full sequence is uncharacterized protein (778 aa).

In terms of domain architecture, PE spans M1–A92. Disordered stretches follow at residues A125 to I163, T372 to F510, and Q718 to G778. Composition is skewed to gly residues over residues N402–G429, D436–F510, and Q718–G763.

Belongs to the mycobacterial PE family. PGRS subfamily.

This is an uncharacterized protein from Mycobacterium tuberculosis (strain CDC 1551 / Oshkosh).